The following is a 79-amino-acid chain: D-alanyl carrier protein (79 aa).

One can recognise a Carrier domain in the interval 2 to 79 (AEFKEQVLDI…MVIKKLEEIR (78 aa)). An O-(pantetheine 4'-phosphoryl)serine modification is found at serine 37.

The protein belongs to the DltC family. In terms of processing, 4'-phosphopantetheine is transferred from CoA to a specific serine of apo-DCP.

The protein resides in the cytoplasm. It functions in the pathway cell wall biogenesis; lipoteichoic acid biosynthesis. Its function is as follows. Carrier protein involved in the D-alanylation of lipoteichoic acid (LTA). The loading of thioester-linked D-alanine onto DltC is catalyzed by D-alanine--D-alanyl carrier protein ligase DltA. The DltC-carried D-alanyl group is further transferred to cell membrane phosphatidylglycerol (PG) by forming an ester bond, probably catalyzed by DltD. D-alanylation of LTA plays an important role in modulating the properties of the cell wall in Gram-positive bacteria, influencing the net charge of the cell wall. The protein is D-alanyl carrier protein of Bacillus anthracis (strain CDC 684 / NRRL 3495).